Here is a 510-residue protein sequence, read N- to C-terminus: NAD(P)H-quinone oxidoreductase subunit 2, chloroplastic (510 aa).

A run of 11 helical transmembrane segments spans residues 24–44, 59–79, 99–119, 124–144, 149–169, 183–203, 295–315, 323–343, 347–367, 395–415, and 418–438; these read LLLFHGSFIFPECILIFGLIL, WFYFISSTSLVMSITALLFRW, IFQFLILLCSTLCIPLSVEYI, MAITEFLLFVLTATLGGMFLC, LITIFVAPECFSLCSYLLSGY, YLLMGGASSSILVHGFSWLYG, WHLLLEILAILSMILGNLIAI, MLAYSSIGQIGYVIIGIIVGD, GYASMITYMLFYISMNLGTFA, ALSSALCLLSLGGLPPLAGFF, and LYLFWCGWQAGLYFLVSIGLL.

The protein belongs to the complex I subunit 2 family. As to quaternary structure, NDH is composed of at least 16 different subunits, 5 of which are encoded in the nucleus.

Its subcellular location is the plastid. It is found in the chloroplast thylakoid membrane. It catalyses the reaction a plastoquinone + NADH + (n+1) H(+)(in) = a plastoquinol + NAD(+) + n H(+)(out). The enzyme catalyses a plastoquinone + NADPH + (n+1) H(+)(in) = a plastoquinol + NADP(+) + n H(+)(out). Functionally, NDH shuttles electrons from NAD(P)H:plastoquinone, via FMN and iron-sulfur (Fe-S) centers, to quinones in the photosynthetic chain and possibly in a chloroplast respiratory chain. The immediate electron acceptor for the enzyme in this species is believed to be plastoquinone. Couples the redox reaction to proton translocation, and thus conserves the redox energy in a proton gradient. The sequence is that of NAD(P)H-quinone oxidoreductase subunit 2, chloroplastic from Asparagus officinalis (Garden asparagus).